The sequence spans 485 residues: NADH-quinone oxidoreductase subunit N (485 aa).

The next 14 membrane-spanning stretches (helical) occupy residues 8–28 (LIAL…MLSI), 35–55 (FLNA…LWFV), 71–91 (GFAM…CTFA), 105–125 (FYLL…ANHL), 127–147 (ALFL…GYAF), 159–179 (YTIL…LVYA), 203–223 (LLAG…LVPF), 235–255 (PAPV…GVVM), 271–291 (IVLG…ALSQ), 297–317 (LLGY…IALQ), 326–346 (VGVY…VVSL), 373–393 (AAVM…LGFI), 408–430 (WWLV…RVAV), and 455–475 (IVVL…QPLI).

Belongs to the complex I subunit 2 family. In terms of assembly, NDH-1 is composed of 13 different subunits. Subunits NuoA, H, J, K, L, M, N constitute the membrane sector of the complex.

The protein resides in the cell inner membrane. The catalysed reaction is a quinone + NADH + 5 H(+)(in) = a quinol + NAD(+) + 4 H(+)(out). Functionally, NDH-1 shuttles electrons from NADH, via FMN and iron-sulfur (Fe-S) centers, to quinones in the respiratory chain. The immediate electron acceptor for the enzyme in this species is believed to be ubiquinone. Couples the redox reaction to proton translocation (for every two electrons transferred, four hydrogen ions are translocated across the cytoplasmic membrane), and thus conserves the redox energy in a proton gradient. This is NADH-quinone oxidoreductase subunit N from Citrobacter koseri (strain ATCC BAA-895 / CDC 4225-83 / SGSC4696).